The following is a 278-amino-acid chain: NH(3)-dependent NAD(+) synthetase (278 aa).

Residue 43–50 coordinates ATP; sequence GISGGVDS. Asp49 contributes to the Mg(2+) binding site. Arg146 is a deamido-NAD(+) binding site. Thr166 is an ATP binding site. Glu171 lines the Mg(2+) pocket. Deamido-NAD(+) is bound by residues Lys179 and Asp186. ATP contacts are provided by Lys195 and Thr217. 266-267 contacts deamido-NAD(+); it reads HK.

It belongs to the NAD synthetase family. As to quaternary structure, homodimer.

The enzyme catalyses deamido-NAD(+) + NH4(+) + ATP = AMP + diphosphate + NAD(+) + H(+). Its pathway is cofactor biosynthesis; NAD(+) biosynthesis; NAD(+) from deamido-NAD(+) (ammonia route): step 1/1. In terms of biological role, catalyzes the ATP-dependent amidation of deamido-NAD to form NAD. Uses ammonia as a nitrogen source. This is NH(3)-dependent NAD(+) synthetase from Pseudoalteromonas translucida (strain TAC 125).